A 343-amino-acid chain; its full sequence is Nicotianamine synthase 3 (343 aa).

It belongs to the nicotianamine synthase (NAS)-like family. As to expression, expressed in leaves.

It carries out the reaction 3 S-adenosyl-L-methionine = nicotianamine + 3 S-methyl-5'-thioadenosine + 3 H(+). Its function is as follows. Synthesizes nicotianamine, a polyamine that is the first intermediate in the synthesis of the phytosiderophores of the mugineic acid type found in gramineae which serve as a sensor for the physiological iron status within the plant, and/or might be involved in the transport of iron. In Oryza sativa subsp. indica (Rice), this protein is Nicotianamine synthase 3 (NAS3).